Consider the following 434-residue polypeptide: Protein maelstrom homolog (434 aa).

Positions 4 to 73 form a DNA-binding region, HMG box; that stretch reads RKASRNAYYF…AQGKDPGPSE (70 aa). A disordered region spans residues 357-385; it reads SHFNSSNEEQRSNTPIGDYPSRAKISGQN.

Belongs to the maelstrom family. As to quaternary structure, interacts with SMARCB1, SIN3B and DDX4. Interacts with piRNA-associated proteins TDRD1, PIWIL1 and PIWIL2. Interacts with TEX19. Testis-specific. Expressed in various cancer cell lines, probably due to demethylation of its promoter.

The protein localises to the cytoplasm. Its subcellular location is the nucleus. Plays a central role during spermatogenesis by repressing transposable elements and preventing their mobilization, which is essential for the germline integrity. Acts via the piRNA metabolic process, which mediates the repression of transposable elements during meiosis by forming complexes composed of piRNAs and Piwi proteins and governs the methylation and subsequent repression of transposons. Its association with piP-bodies suggests a participation in the secondary piRNAs metabolic process. Required for the localization of germ-cell factors to the meiotic nuage. The chain is Protein maelstrom homolog (MAEL) from Homo sapiens (Human).